The following is a 138-amino-acid chain: Large ribosomal subunit protein uL16 (138 aa).

Residues 1–13 show a composition bias toward basic residues; that stretch reads MLQPKRRKYRKEQ. Positions 1–20 are disordered; sequence MLQPKRRKYRKEQKGRNTGI.

It belongs to the universal ribosomal protein uL16 family. Part of the 50S ribosomal subunit.

In terms of biological role, binds 23S rRNA and is also seen to make contacts with the A and possibly P site tRNAs. This chain is Large ribosomal subunit protein uL16, found in Burkholderia mallei (strain NCTC 10247).